The chain runs to 557 residues: Polypyrimidine tract-binding protein 1 (557 aa).

Met-1 carries the post-translational modification N-acetylmethionine. Ser-16 bears the Phosphoserine mark. 3 consecutive RRM domains span residues 59 to 143, 184 to 260, and 363 to 437; these read RVIH…SSPN, LRII…FSKL, and SVLL…LSKH. A Glycyl lysine isopeptide (Lys-Gly) (interchain with G-Cter in SUMO2) cross-link involves residue Lys-65. Phosphotyrosine is present on Tyr-127. Thr-138 bears the Phosphothreonine mark. A Phosphoserine modification is found at Ser-141. Lys-218 participates in a covalent cross-link: Glycyl lysine isopeptide (Lys-Gly) (interchain with G-Cter in SUMO2). The disordered stretch occupies residues 437–460; the sequence is HQSVQLPREGQEDQGLTKDYGNSP. Ser-459 is subject to Phosphoserine. The 76-residue stretch at 480 to 555 folds into the RRM 4 domain; sequence ATLHLSNIPP…HHLRVSFSKS (76 aa).

In terms of assembly, monomer. Part of a ternary complex containing KHSRP, PTBP1, PTBP2 and HNRPH1. Interacts with RAVER1 and SFPQ.

Its subcellular location is the nucleus. Its function is as follows. Plays a role in pre-mRNA splicing and in the regulation of alternative splicing events. Activates exon skipping of its own pre-mRNA during muscle cell differentiation. Binds to the polypyrimidine tract of introns. May promote RNA looping when bound to two separate polypyrimidine tracts in the same pre-mRNA. May promote the binding of U2 snRNP to pre-mRNA. Cooperates with RAVER1 to modulate switching between mutually exclusive exons during maturation of the TPM1 pre-mRNA. Represses the splicing of MAPT/Tau exon 10. Binds to polypyrimidine-rich controlling element (PCE) of CFTR and promotes exon skipping of CFTR exon 9, thereby antagonizing TIA1 and its role in exon inclusion of CFTR exon 9. Plays a role in the splicing of pyruvate kinase PKM by binding repressively to a polypyrimidine tract flanking PKM exon 9, inhibiting exon 9 inclusion and resulting in exon 10 inclusion and production of the PKM M2 isoform. The protein is Polypyrimidine tract-binding protein 1 (PTBP1) of Bos taurus (Bovine).